The following is a 259-amino-acid chain: Polycomb group RING finger protein 1 (259 aa).

Alanine 2 is modified (N-acetylalanine). Serine 3 carries the post-translational modification Phosphoserine. Lysine 24 participates in a covalent cross-link: Glycyl lysine isopeptide (Lys-Gly) (interchain with G-Cter in SUMO2). The RING-type zinc-finger motif lies at 47–86 (CCLCAGYFVDATTITECLHTFCKSCIVKYLQTSKYCPMCN). Residues 86–247 (NIKIHETQPL…LSRWFGKPSP (162 aa)) form a necessary for repressor activity region. Lysine 88 is covalently cross-linked (Glycyl lysine isopeptide (Lys-Gly) (interchain with G-Cter in SUMO2)). The segment at 150–255 (LPFSSFDHSK…SPLLLQYSVK (106 aa)) is required for the interaction with the KDM2B-SKP1 heterodimeric complex. The RING-finger and WD40-associated ubiquitin-like domain (RAWUL); sufficient for interaction with BCOR and BCORL1 stretch occupies residues 167–255 (EQLSLCLERL…SPLLLQYSVK (89 aa)).

In terms of assembly, interacts with BCORL1, forming heterodimers. The PCGF1-BCORL1 heterodimeric complex interacts with the KDM2B-SKP1 heterodimeric complex to form a homotetrameric polycomb repression complex 1 (PRC1.1). Component of the repressive BCOR complex containing a Polycomb group subcomplex at least composed of RYBP, RING1 and RNF2/RING2. Specifically interacts with BCOR, RING1 and RNF2/RING2. Component of a PRC1-like complex. Interacts with CBX6, CBX7 and CBX8. Interacts with DPPA4, NANOG, POU5F1 and RYBP.

Its subcellular location is the nucleus. Its function is as follows. Component of the Polycomb group (PcG) multiprotein BCOR complex, a complex required to maintain the transcriptionally repressive state of some genes, such as BCL6 and the cyclin-dependent kinase inhibitor, CDKN1A. Transcriptional repressor that may be targeted to the DNA by BCL6; this transcription repressor activity may be related to PKC signaling pathway. Represses CDKN1A expression by binding to its promoter, and this repression is dependent on the retinoic acid response element (RARE element). Promotes cell cycle progression and enhances cell proliferation as well. May have a positive role in tumor cell growth by down-regulating CDKN1A. Component of a Polycomb group (PcG) multiprotein PRC1-like complex, a complex class required to maintain the transcriptionally repressive state of many genes, including Hox genes, throughout development. PcG PRC1 complex acts via chromatin remodeling and modification of histones; it mediates monoubiquitination of histone H2A 'Lys-119', rendering chromatin heritably changed in its expressibility. Within the PRC1-like complex, regulates RNF2 ubiquitin ligase activity. Regulates the expression of DPPA4 and NANOG in the NT2 embryonic carcinoma cells. In Mus musculus (Mouse), this protein is Polycomb group RING finger protein 1 (Pcgf1).